Here is a 323-residue protein sequence, read N- to C-terminus: Cyclin-H (323 aa).

Ser-5 bears the Phosphoserine; by CDK8 mark. A Phosphoserine modification is found at Ser-132. The disordered stretch occupies residues 295 to 323 (KGYEDDDYVSKKPKQEEEEWTDDDLVDSL). Ser-304 is modified (phosphoserine; by CDK8). A compositionally biased stretch (acidic residues) spans 310–323 (EEEEWTDDDLVDSL). Thr-315 is subject to Phosphothreonine. Phosphoserine is present on Ser-322.

Belongs to the cyclin family. Cyclin C subfamily. Associates primarily with CDK7 and MAT1 to form the CAK complex. CAK can further associate with the core-TFIIH to form the TFIIH basal transcription factor. As to expression, expressed in both the germinal and somatic cells of the testis.

It is found in the nucleus. In terms of biological role, regulates CDK7, the catalytic subunit of the CDK-activating kinase (CAK) enzymatic complex. CAK activates the cyclin-associated kinases CDK1, CDK2, CDK4 and CDK6 by threonine phosphorylation. CAK complexed to the core-TFIIH basal transcription factor activates RNA polymerase II by serine phosphorylation of the repetitive C-terminal domain (CTD) of its large subunit (POLR2A), allowing its escape from the promoter and elongation of the transcripts. Involved in cell cycle control and in RNA transcription by RNA polymerase II. Its expression and activity are constant throughout the cell cycle. This Mus musculus (Mouse) protein is Cyclin-H (Ccnh).